The following is a 150-amino-acid chain: Phosphoribosyl-AMP cyclohydrolase (150 aa).

Asp93 contributes to the Mg(2+) binding site. Cys94 lines the Zn(2+) pocket. Asp95 and Asp97 together coordinate Mg(2+). Residues Cys112 and Cys119 each coordinate Zn(2+).

This sequence belongs to the PRA-CH family. As to quaternary structure, homodimer. Requires Mg(2+) as cofactor. Zn(2+) is required as a cofactor.

It is found in the cytoplasm. The catalysed reaction is 1-(5-phospho-beta-D-ribosyl)-5'-AMP + H2O = 1-(5-phospho-beta-D-ribosyl)-5-[(5-phospho-beta-D-ribosylamino)methylideneamino]imidazole-4-carboxamide. Its pathway is amino-acid biosynthesis; L-histidine biosynthesis; L-histidine from 5-phospho-alpha-D-ribose 1-diphosphate: step 3/9. Catalyzes the hydrolysis of the adenine ring of phosphoribosyl-AMP. The polypeptide is Phosphoribosyl-AMP cyclohydrolase (Rhizobium leguminosarum bv. trifolii (strain WSM2304)).